Reading from the N-terminus, the 1511-residue chain is MSSTDEHIEKDISSRSNHDDDYANSVQSYAASEGQVDNEDLAATSQLSRHLSNILSNEEGIERLESMARVISHKTKKEMDSFEINDLDFDLRSLLHYLRSRQLEQGIEPGDSGIAFKNLTAVGVDASAAYGPSVEEMFRNIASIPAHLISKFTKKSDVPLRNIIQNCTGVVESGEMLFVVGRPGAGCSTFLKCLSGETSELVDVQGEFSYDGLDQSEMMSKYKGYVIYCPELDFHFPKITVKETIDFALKCKTPRVRIDKMTRKQYVDNIRDMWCTVFGLRHTYATKVGNDFVRGVSGGERKRVSLVEAQAMNASIYSWDNATRGLDASTALEFAQAIRTATNMVNNSAIVAIYQAGENIYELFDKTTVLYNGRQIYFGPADKAVGYFQRMGWVKPNRMTSAEFLTSVTVDFENRTLDIKPGYEDKVPKSSSEFEEYWLNSEDYQELLRTYDDYQSRHPVNETRDRLDVAKKQRLQQGQRENSQYVVNYWTQVYYCMIRGFQRVKGDSTYTKVYLSSFLIKALIIGSMFHKIDDKSQSTTAGAYSRGGMLFYVLLFASVTSLAEIGNSFSSRPVIVKHKSYSMYHLSAESLQEIITEFPTKFVAIVILCLITYWIPFMKYEAGAFFQYILYLLTVQQCTSFIFKFVATMSKSGVDAHAVGGLWVLMLCVYAGFVLPIGEMHHWIRWLHFINPLTYAFESLVSTEFHHREMLCSALVPSGPGYEGISIANQVCDAAGAVKGNLYVSGDSYILHQYHFAYKHAWRNWGVNIVWTFGYIVFNVILSEYLKPVEGGGDLLLYKRGHMPELGTENADARTASREEMMEALNGPNVDLEKVIAEKDVFTWNHLDYTIPYDGATRKLLSDVFGYVKPGKMTALMGESGAGKTTLLNVLAQRINMGVITGDMLVNAKPLPASFNRSCGYVAQADNHMAELSVRESLRFAAELRQQSSVPLEEKYEYVEKIITLLGMQNYAEALVGKTGRGLNVEQRKKLSIGVELVAKPSLLLFLDEPTSGLDSQSAWSIVQFMRALADSGQSILCTIHQPSATLFEQFDRLLLLKKGGKMVYFGDIGPNSETLLKYFERQSGMKCGVSENPAEYILNCIGAGATASVNSDWHDLWLASPECAAARAEVEELHRTLPGRAVNDDPELATRFAASYMTQIKCVLRRTALQFWRSPVYIRAKFFECVACALFVGLSYVGVNHSVGGAIEAFSSIFMLLLIALAMINQLHVFAYDSRELYEVREAASNTFHWSVLLLCHAAVENFWSTLCQFMCFICYYWPAQFSGRASHAGFFFFFYVLIFPLYFVTYGLWILYMSPDVPSASMINSNLFAAMLLFCGILQPREKMPAFWRRLMYNVSPFTYVVQALVTPLVHNKKVVCNPHEYNIMDPPSGKTCGEFLSTYMDNNTGYLVNPTATENCQYCPYTVQDQVVAKYNVKWDHRWRNFGFMWAYICFNIAAMLICYYVVRVKVWSLKSVLNFKKWFNGPRKERHEKDTNIFQTVPGDENKITKK.

Residues 1–21 (MSSTDEHIEKDISSRSNHDDD) show a composition bias toward basic and acidic residues. Residues 1–37 (MSSTDEHIEKDISSRSNHDDDYANSVQSYAASEGQVD) are disordered. Residue Ser-2 is modified to N-acetylserine. Topologically, residues 2–508 (SSTDEHIEKD…RGFQRVKGDS (507 aa)) are cytoplasmic. 3 positions are modified to phosphoserine: Ser-32, Ser-52, and Ser-56. The 254-residue stretch at 144-397 (IPAHLISKFT…FQRMGWVKPN (254 aa)) folds into the ABC transporter 1 domain. Lys-426 participates in a covalent cross-link: Glycyl lysine isopeptide (Lys-Gly) (interchain with G-Cter in ubiquitin). The chain crosses the membrane as a helical span at residues 509 to 529 (TYTKVYLSSFLIKALIIGSMF). Residues 530-548 (HKIDDKSQSTTAGAYSRGG) are Extracellular-facing. Residues 549 to 569 (MLFYVLLFASVTSLAEIGNSF) form a helical membrane-spanning segment. Topologically, residues 570–597 (SSRPVIVKHKSYSMYHLSAESLQEIITE) are cytoplasmic. Residues 598–618 (FPTKFVAIVILCLITYWIPFM) traverse the membrane as a helical segment. The Extracellular segment spans residues 619-622 (KYEA). The chain crosses the membrane as a helical span at residues 623–643 (GAFFQYILYLLTVQQCTSFIF). The Cytoplasmic segment spans residues 644–657 (KFVATMSKSGVDAH). The helical transmembrane segment at 658–678 (AVGGLWVLMLCVYAGFVLPIG) threads the bilayer. Over 679 to 765 (EMHHWIRWLH…FAYKHAWRNW (87 aa)) the chain is Extracellular. Residues 766 to 786 (GVNIVWTFGYIVFNVILSEYL) traverse the membrane as a helical segment. The Cytoplasmic segment spans residues 787 to 1182 (KPVEGGGDLL…WRSPVYIRAK (396 aa)). Residues 836–1084 (IAEKDVFTWN…TLLKYFERQS (249 aa)) form the ABC transporter 2 domain. ATP is bound by residues 878-885 (GESGAGKT) and 972-979 (AEALVGKT). Residues 1183–1203 (FFECVACALFVGLSYVGVNHS) form a helical membrane-spanning segment. A topological domain (extracellular) is located at residue Val-1204. The chain crosses the membrane as a helical span at residues 1205-1225 (GGAIEAFSSIFMLLLIALAMI). At 1226–1254 (NQLHVFAYDSRELYEVREAASNTFHWSVL) the chain is on the cytoplasmic side. A helical membrane pass occupies residues 1255 to 1275 (LLCHAAVENFWSTLCQFMCFI). Residues 1276-1291 (CYYWPAQFSGRASHAG) lie on the Extracellular side of the membrane. A helical transmembrane segment spans residues 1292 to 1312 (FFFFFYVLIFPLYFVTYGLWI). Residues 1313-1318 (LYMSPD) are Cytoplasmic-facing. The chain crosses the membrane as a helical span at residues 1319-1339 (VPSASMINSNLFAAMLLFCGI). The Extracellular segment spans residues 1340-1444 (LQPREKMPAF…NVKWDHRWRN (105 aa)). Asn-1405 carries an N-linked (GlcNAc...) asparagine glycan. Residues 1445–1465 (FGFMWAYICFNIAAMLICYYV) form a helical membrane-spanning segment. Residues 1466-1511 (VRVKVWSLKSVLNFKKWFNGPRKERHEKDTNIFQTVPGDENKITKK) are Cytoplasmic-facing.

It belongs to the ABC transporter superfamily. ABCG family. PDR (TC 3.A.1.205) subfamily.

It is found in the cell membrane. In terms of biological role, plasma membrane transporter which mediates resistance to water-soluble, monocarboxylic acids with chain lengths of from C1 to C7 by active extrusion of the preservative anions from the cytosol. Also involved in the export of aromatic and branched-chain organic acids produced in amino acid catabolism. The polypeptide is ATP-dependent permease PDR12 (PDR12) (Saccharomyces cerevisiae (strain ATCC 204508 / S288c) (Baker's yeast)).